Reading from the N-terminus, the 133-residue chain is Small ribosomal subunit protein uS8 (133 aa).

It belongs to the universal ribosomal protein uS8 family. As to quaternary structure, part of the 30S ribosomal subunit. Contacts proteins S5 and S12.

One of the primary rRNA binding proteins, it binds directly to 16S rRNA central domain where it helps coordinate assembly of the platform of the 30S subunit. This is Small ribosomal subunit protein uS8 from Amoebophilus asiaticus (strain 5a2).